A 361-amino-acid chain; its full sequence is Glyceraldehyde-3-phosphate dehydrogenase, glycosomal (361 aa).

NAD(+)-binding positions include 13–14, D39, and R93; that span reads RI. Residues 166–168, T198, 227–228, and R250 each bind D-glyceraldehyde 3-phosphate; these read SCT and TG. C167 functions as the Nucleophile in the catalytic mechanism. N336 contacts NAD(+). The Microbody targeting signal motif lies at 359 to 361; sequence SKL.

Belongs to the glyceraldehyde-3-phosphate dehydrogenase family. As to quaternary structure, homotetramer.

The protein resides in the glycosome. The enzyme catalyses D-glyceraldehyde 3-phosphate + phosphate + NAD(+) = (2R)-3-phospho-glyceroyl phosphate + NADH + H(+). It participates in carbohydrate degradation; glycolysis; pyruvate from D-glyceraldehyde 3-phosphate: step 1/5. This Crithidia fasciculata protein is Glyceraldehyde-3-phosphate dehydrogenase, glycosomal (GAPDG).